Here is a 325-residue protein sequence, read N- to C-terminus: Delta(1)-pyrroline-2-carboxylate reductase (325 aa).

The protein belongs to the ornithine cyclodeaminase/mu-crystallin family.

The enzyme catalyses L-proline + NAD(+) = 1-pyrroline-2-carboxylate + NADH + H(+). The catalysed reaction is L-proline + NADP(+) = 1-pyrroline-2-carboxylate + NADPH + H(+). Catalyzes the reduction of Delta(1)-pyrroline-2-carboxylate (Pyr2C) to L-proline, using preferentially NADPH over NADH as the electron donor. May be involved in a degradation pathway that converts trans-3-hydroxy-L-proline (t3LHyp) to L-proline. In Bacillus cereus (strain ZK / E33L), this protein is Delta(1)-pyrroline-2-carboxylate reductase.